A 422-amino-acid chain; its full sequence is Histone-binding protein MSI1 (422 aa).

WD repeat units follow at residues 127–158, 198–238, 249–289, 294–334, 338–379, and 382–421; these read FPNG…YIFD, ADIN…HENP, SDGT…EKLQ, KHDG…KSPI, EHGT…TIFT, and GHML…LVGH.

It belongs to the WD repeat RBAP46/RBAP48/MSI1 family. Component of chromatin assembly factor 1 (CAF-1), composed of MSI1/p50, CAC2/p60 and CAC1/p90. Interacts with protein kinase NPR1. Interacts with RTT106.

The protein resides in the cytoplasm. It localises to the nucleus. Its function is as follows. Acts as a component of the histone chaperone complex chromatin assembly factor 1 (CAF-1), which assembles histone octamers onto DNA during replication and repair. CAF-1 performs the first step of the nucleosome assembly process, bringing newly synthesized histones H3 and H4 to replicating DNA; histones H2A/H2B can bind to this chromatin precursor subsequent to DNA replication to complete the histone octamer. Plays a role in the maintenance of heterochromatin. Independently, MSI1 is involved in regulation of the RAS/cAMP pathway via sequestration of NPR1. This is Histone-binding protein MSI1 (MSI1) from Saccharomyces cerevisiae (strain ATCC 204508 / S288c) (Baker's yeast).